Reading from the N-terminus, the 802-residue chain is MSFHHRVFKLSALSLALFSHLSFASTDSELNLDFLQGMSAIPSVLKSGSDFPAGQYYVDVIVNQENVGKARLSITPQEESANALCLSPEWLKAAGVPVRLEGYASTLNAAGQCYVLSRNPYTRVDFSYGSQSLVFSIPQSFLVGKTDPSRWDYGVPAARLKYSANASQTSGQSTSAYANADLMVNLGRWVLASNMSASRYADGSGEFTARDITLSTAISQVQGDLLLGKSQTRSALFSDFGFYGAALRSNSNMLPWEARGYAPLITGVANSTSRVTISQNGYAVYSKVVPPGPYQLDDVRSVGNGDLVVTVEDASGHKTTTVYPVTTLPTLLRPGEVEYNVAVGRKSSNYKLKKPFADGENGMFWMGSVGYGFDSTTLNAASILHGKYQAGGVSVTQALGGFGAVSAGMNLSQAKYDNGDNKRGHSVSAKYAKSFSDSSDLQLLAYRYQSKGYVEFADFYSTDRYTRYNTKSRYEMRFSQRLGNSNLNLAGWQEDYWWMKGKAIGGDVSLSTTILDGVSVFLNGSYSKRPYLDKPDYSTSLSFSIPFTLGGVRHYSSTGLSYSSSGRMGMNSGVSASPTDRLSYGLNTNLSDKGDRSLSGNLSYGFDAIQTNMMLSQGRDNTTVSGSVSGTILGTADSGLMMTKETGNTLGVARIPGVKGVRINGSAPTNSKGYTVVNLSDYSLNRVSVDMENVPDDLELQTTSFNVVPTEKAVVYREFGAEHVLRYILRVKERDGRILNGGSAQTEQGLDAGFIAGNGVLLMNMLSAPSRVSVERGDGSVCHFSVKGIVPNTGKVQEVYCE.

The signal sequence occupies residues 1–24; sequence MSFHHRVFKLSALSLALFSHLSFA. A disulfide bond links C782 and C801.

It belongs to the fimbrial export usher family.

It is found in the cell outer membrane. Involved in the export and assembly of FimA fimbrial subunits across the outer membrane. The sequence is that of Outer membrane usher protein PefC (pefC) from Salmonella typhimurium (strain LT2 / SGSC1412 / ATCC 700720).